A 359-amino-acid polypeptide reads, in one-letter code: Protein Wnt-5b (359 aa).

The N-terminal stretch at 1–17 (MPSLLLLFTAALLSSWA) is a signal peptide. An intrachain disulfide couples Cys-83 to Cys-94. 2 N-linked (GlcNAc...) asparagine glycosylation sites follow: Asn-93 and Asn-99. 10 disulfide bridges follow: Cys-133–Cys-141, Cys-143–Cys-161, Cys-217–Cys-231, Cys-219–Cys-226, Cys-288–Cys-319, Cys-304–Cys-314, Cys-318–Cys-358, Cys-334–Cys-349, Cys-336–Cys-346, and Cys-341–Cys-342. A lipid anchor (O-palmitoleoyl serine; by PORCN) is attached at Ser-223. 2 N-linked (GlcNAc...) asparagine glycosylation sites follow: Asn-291 and Asn-305.

This sequence belongs to the Wnt family. In terms of assembly, interacts with PORCN. In terms of processing, palmitoleoylation is required for efficient binding to frizzled receptors. Depalmitoleoylation leads to Wnt signaling pathway inhibition.

The protein resides in the secreted. The protein localises to the extracellular space. It localises to the extracellular matrix. In terms of biological role, ligand for members of the frizzled family of seven transmembrane receptors. Probable developmental protein. May be a signaling molecule which affects the development of discrete regions of tissues. Is likely to signal over only few cell diameters. This is Protein Wnt-5b (WNT5B) from Homo sapiens (Human).